A 320-amino-acid polypeptide reads, in one-letter code: Tyrosine recombinase XerC (320 aa).

Residues 14 to 104 (ADVREAVASW…SLRSFARHLE (91 aa)) enclose the Core-binding (CB) domain. A Tyr recombinase domain is found at 125–311 (RLPRPLPVAA…DSARLMSAFE (187 aa)). Catalysis depends on residues arginine 170, lysine 195, histidine 263, arginine 266, and histidine 289. Residue tyrosine 298 is the O-(3'-phospho-DNA)-tyrosine intermediate of the active site.

The protein belongs to the 'phage' integrase family. XerC subfamily. In terms of assembly, forms a cyclic heterotetrameric complex composed of two molecules of XerC and two molecules of XerD.

The protein localises to the cytoplasm. Its function is as follows. Site-specific tyrosine recombinase, which acts by catalyzing the cutting and rejoining of the recombining DNA molecules. The XerC-XerD complex is essential to convert dimers of the bacterial chromosome into monomers to permit their segregation at cell division. It also contributes to the segregational stability of plasmids. The protein is Tyrosine recombinase XerC of Methylobacterium sp. (strain 4-46).